Consider the following 567-residue polypeptide: MEYDYIIIGAGSAGNVLAARLTEDADVTVLLLEAGGPDYRLDFRTQMPAALAFPLQGKRYNWAYETDPEPHMNNRRMECGRGKGLGGSSLINGMCYIRGNAMDFDHWASLSGLEDWSYLDCLPYFRKAETRDIGPNDFHGGEGPVSVTTPKIGNNPLFHAMVAAGVQAGYPRTDDLNGYQQEGFGPMDRTVTPKGRRASTARGYLDQARPRNNLTIITHALTDRILFEGKRATGVRYLKGDAGTGQTAYARREVLLCGGAIASPQILQRSGIGPAELLQRLDIPLVQALPGVGENLQDHLEMYLQYSCKQPVSLYPALLWFNQPKIGIEWLFNGTGVGASNQFEAGGFIRSRDAFTWPNIQYHFLPVAINYNGSNAVKEHGFQAHVGSMRSPSRGRIQVKSKDPRQHPSILFNYMSSEQDWHEFRDAIRITREIIAQPALDPYRGREISPGANVQNDDELDAFIREHAETAYHPSCSCKMGDDKMAVVDGQGRVHGVQGLRVVDASIMPQIITGNLNATTIMIAEKIADRIRGCQPLAKSNAAYFIAGDTPARTSPVRHSLPVTSYP.

An FAD-binding site is contributed by 4–33 (DYIIIGAGSAGNVLAARLTEDADVTVLLLE). His-473 (proton acceptor) is an active-site residue.

Belongs to the GMC oxidoreductase family. The cofactor is FAD.

It catalyses the reaction choline + A = betaine aldehyde + AH2. It carries out the reaction betaine aldehyde + NAD(+) + H2O = glycine betaine + NADH + 2 H(+). The protein operates within amine and polyamine biosynthesis; betaine biosynthesis via choline pathway; betaine aldehyde from choline (cytochrome c reductase route): step 1/1. Involved in the biosynthesis of the osmoprotectant glycine betaine. Catalyzes the oxidation of choline to betaine aldehyde and betaine aldehyde to glycine betaine at the same rate. This is Oxygen-dependent choline dehydrogenase from Yersinia pestis bv. Antiqua (strain Antiqua).